The sequence spans 296 residues: 4-hydroxy-tetrahydrodipicolinate synthase (296 aa).

Thr-49 is a pyruvate binding site. Catalysis depends on Tyr-137, which acts as the Proton donor/acceptor. Lys-165 acts as the Schiff-base intermediate with substrate in catalysis. Ile-207 lines the pyruvate pocket.

This sequence belongs to the DapA family. Homotetramer; dimer of dimers.

The protein resides in the cytoplasm. The catalysed reaction is L-aspartate 4-semialdehyde + pyruvate = (2S,4S)-4-hydroxy-2,3,4,5-tetrahydrodipicolinate + H2O + H(+). It participates in amino-acid biosynthesis; L-lysine biosynthesis via DAP pathway; (S)-tetrahydrodipicolinate from L-aspartate: step 3/4. In terms of biological role, catalyzes the condensation of (S)-aspartate-beta-semialdehyde [(S)-ASA] and pyruvate to 4-hydroxy-tetrahydrodipicolinate (HTPA). This chain is 4-hydroxy-tetrahydrodipicolinate synthase, found in Afipia carboxidovorans (strain ATCC 49405 / DSM 1227 / KCTC 32145 / OM5) (Oligotropha carboxidovorans).